Consider the following 192-residue polypeptide: uncharacterized protein (192 aa).

Positions 29–160 constitute a Nudix hydrolase domain; sequence QRQAAVLIPV…PLDVYRRGNS (132 aa). The Nudix box signature appears at 67–89; it reads GAVDSTDASLIAAALREAQEEVA. Residues Glu-83 and Glu-87 each contribute to the Mg(2+) site.

This sequence belongs to the Nudix hydrolase family. PCD1 subfamily. The cofactor is Mn(2+). It depends on Mg(2+) as a cofactor.

Its function is as follows. Probably mediates the hydrolysis of some nucleoside diphosphate derivatives. This is an uncharacterized protein from Salmonella newport (strain SL254).